A 124-amino-acid polypeptide reads, in one-letter code: Large ribosomal subunit protein eL31 (124 aa).

The protein belongs to the eukaryotic ribosomal protein eL31 family.

In Spodoptera frugiperda (Fall armyworm), this protein is Large ribosomal subunit protein eL31 (RpL31).